The primary structure comprises 183 residues: uncharacterized protein (183 aa).

This is an uncharacterized protein from Bacillus subtilis (strain 168).